The following is a 1004-amino-acid chain: Sal-like protein 2 (1004 aa).

Disordered stretches follow at residues 1–33, 51–122, 137–177, 220–270, and 285–307; these read MSRR…EDHP, AHQN…EESS, GGGL…SGHL, PASP…EPPK, and PFSV…ALPG. Residues 34–56 form a C2H2-type 1; atypical zinc finger; that stretch reads QVCAKCCAQFSDPTEFLAHQNSC. Residues 71–81 show a composition bias toward low complexity; it reads NPSNSSASSAP. The span at 83–98 shows a compositional bias: basic and acidic residues; sequence PEGHSRSQVMDTEHSN. A compositionally biased stretch (low complexity) spans 99-110; it reads PPDSGSSGAPDP. Over residues 151–171 the composition is skewed to pro residues; sequence PLPPESTPAPPPPPPPPPPPG. At Ser-243 the chain carries Phosphoserine. C2H2-type zinc fingers lie at residues 372 to 394, 400 to 422, 629 to 651, 657 to 679, and 689 to 711; these read HKCR…LRSH, YKCN…FHRH, NQCV…YGQH, FKCK…FVGH, and NSCP…VRMH. The interval 712–910 is disordered; the sequence is LGGQIPNGGS…PGESSGRKAC (199 aa). Over residues 731–742 the composition is skewed to polar residues; that stretch reads QENSSEQSTASG. Residues 756–779 are compositionally biased toward acidic residues; that stretch reads PEEEMSEEEEEDEEEEEDVTDEDS. 3 positions are modified to phosphoserine: Ser-794, Ser-799, and Ser-803. A compositionally biased stretch (acidic residues) spans 800 to 809; the sequence is EEVSGAEEEV. Over residues 810–819 the composition is skewed to low complexity; that stretch reads ATSVAAPTTV. Over residues 820–829 the composition is skewed to basic and acidic residues; sequence KEMDSNEKAP. Over residues 832-841 the composition is skewed to pro residues; it reads TLPPPPPPPD. Basic and acidic residues predominate over residues 896–910; that stretch reads AMKKDPGESSGRKAC. A Glycyl lysine isopeptide (Lys-Gly) (interchain with G-Cter in ubiquitin) cross-link involves residue Lys-908. 2 consecutive C2H2-type zinc fingers follow at residues 908 to 930 and 937 to 961; these read KACE…QKTH and FTCV…LAHH.

It belongs to the sal C2H2-type zinc-finger protein family. As to expression, expressed throughout embryonic development. In adult predominantly in brain.

The protein resides in the nucleus. In terms of biological role, probable transcription factor that plays a role in eye development before, during, and after optic fissure closure. The sequence is that of Sal-like protein 2 (Sall2) from Mus musculus (Mouse).